A 268-amino-acid polypeptide reads, in one-letter code: MAKMTTIKMKRLLEDRLKNPEYRIVYKRDDDALRIEWRDSGQGMTVSLPNLITKYNNRGDIAIQEMEEHIIEALKIMNETHHLQGMEKHIFPVLRSPSFPIETKAGKKLIYKDHTAETRVFYALDLGKSYRLIDEELLKEEEWTLDRLDEIASFNVRSLSHEVKKDQVADNDFYFLATQDGYDASRILNEAFLEEMKANAQGELTVAVPHQDVLIIADIQNKMGYDILAQMTMKFFAEGRIPITSLSFVYEDRKLEPIFILAKNKPEK.

It belongs to the UPF0354 family.

The polypeptide is UPF0354 protein OB2234 (Oceanobacillus iheyensis (strain DSM 14371 / CIP 107618 / JCM 11309 / KCTC 3954 / HTE831)).